Reading from the N-terminus, the 561-residue chain is Potassium-transporting ATPase potassium-binding subunit (561 aa).

A run of 12 helical transmembrane segments spans residues 5 to 25, 60 to 80, 86 to 106, 130 to 150, 177 to 197, 247 to 267, 281 to 301, 324 to 344, 376 to 396, 415 to 435, 491 to 511, and 533 to 553; these read LAAGLQIAFVLAVLAIAYVPV, YGYAASVLGFSLASALFLYFL, VLPLSDGLSGVSPAVAFNTAI, VGLAVQNFVSAAVGMAVAIAL, ILLPFSFVIALILLSQGVIQS, PTPLSNIVEILAILLIPVCLT, LTLLAVMGILWSGLLAVTLAA, FGIPGSALFAVATTGTSTGAV, GLYGILVLALIAVFVGGLLVG, ALSILVMPALVLIGTAITVIL, ICMLLGRFLPIIFVLALAGAL, and GLLTGTVVLVAALTFFPALAL.

It belongs to the KdpA family. In terms of assembly, the system is composed of three essential subunits: KdpA, KdpB and KdpC.

Its subcellular location is the cell membrane. Its function is as follows. Part of the high-affinity ATP-driven potassium transport (or Kdp) system, which catalyzes the hydrolysis of ATP coupled with the electrogenic transport of potassium into the cytoplasm. This subunit binds the extracellular potassium ions and delivers the ions to the membrane domain of KdpB through an intramembrane tunnel. The sequence is that of Potassium-transporting ATPase potassium-binding subunit from Rhodococcus erythropolis (strain PR4 / NBRC 100887).